The primary structure comprises 1085 residues: Phosphorylase b kinase regulatory subunit beta (1085 aa).

Phosphoserine is present on residues Ser10, Ser19, and Ser693. Calmodulin-binding regions lie at residues 760–787 and 912–943; these read RVYR…VVDS and SGRC…ILER. Residue Cys1082 is the site of S-farnesyl cysteine attachment.

The protein belongs to the phosphorylase b kinase regulatory chain family. As to quaternary structure, hexadecamer of 4 heterotetramers, each composed of alpha, beta, gamma, and delta subunits. Alpha (PHKA1 or PHKA2) and beta (PHKB) are regulatory subunits, gamma (PHKG1 or PHKG2) is the catalytic subunit, and delta is calmodulin. Post-translationally, although the final Cys may be farnesylated, the terminal tripeptide is probably not removed, and the C-terminus is not methylated.

The protein localises to the cell membrane. The protein operates within glycan biosynthesis; glycogen metabolism. With respect to regulation, by phosphorylation of various serine residues. Functionally, phosphorylase b kinase catalyzes the phosphorylation of serine in certain substrates, including troponin I. The beta chain acts as a regulatory unit and modulates the activity of the holoenzyme in response to phosphorylation. The sequence is that of Phosphorylase b kinase regulatory subunit beta (Phkb) from Mus musculus (Mouse).